A 181-amino-acid chain; its full sequence is Transcription termination/antitermination protein NusG (181 aa).

Residues 130 to 161 enclose the KOW domain; sequence PGEMVRVNDGPFADFNGVVEEVDYEKSRLKVS.

This sequence belongs to the NusG family. In terms of assembly, monomer. Interacts with the transcription termination factor Rho and with RNA polymerase.

Its function is as follows. Participates in transcription elongation, termination and antitermination. In the absence of Rho, increases the rate of transcription elongation by the RNA polymerase (RNAP), probably by partially suppressing pausing. In the presence of Rho, modulates most Rho-dependent termination events by interacting with the RNAP to render the complex more susceptible to the termination activity of Rho. May be required to overcome a kinetic limitation of Rho to function at certain terminators. Also involved in ribosomal RNA transcriptional antitermination. In Shigella flexneri, this protein is Transcription termination/antitermination protein NusG.